Reading from the N-terminus, the 82-residue chain is Small ribosomal subunit protein bS18 (82 aa).

It belongs to the bacterial ribosomal protein bS18 family. As to quaternary structure, part of the 30S ribosomal subunit. Forms a tight heterodimer with protein bS6.

Binds as a heterodimer with protein bS6 to the central domain of the 16S rRNA, where it helps stabilize the platform of the 30S subunit. The polypeptide is Small ribosomal subunit protein bS18 (Sinorhizobium fredii (strain NBRC 101917 / NGR234)).